Reading from the N-terminus, the 894-residue chain is Alanine--tRNA ligase (894 aa).

This sequence belongs to the class-II aminoacyl-tRNA synthetase family.

It is found in the cytoplasm. The catalysed reaction is tRNA(Ala) + L-alanine + ATP = L-alanyl-tRNA(Ala) + AMP + diphosphate. Functionally, catalyzes the attachment of alanine to tRNA(Ala) in a two-step reaction: alanine is first activated by ATP to form Ala-AMP and then transferred to the acceptor end of tRNA(Ala). Also edits incorrectly charged Ser-tRNA(Ala) and Gly-tRNA(Ala) via its editing domain. In Leuconostoc citreum (strain KM20), this protein is Alanine--tRNA ligase (alaS).